A 260-amino-acid chain; its full sequence is tRNA (guanine-N(1)-)-methyltransferase (260 aa).

S-adenosyl-L-methionine contacts are provided by residues Gly-117 and 137–142 (LGDFVL).

Belongs to the RNA methyltransferase TrmD family. In terms of assembly, homodimer.

Its subcellular location is the cytoplasm. The catalysed reaction is guanosine(37) in tRNA + S-adenosyl-L-methionine = N(1)-methylguanosine(37) in tRNA + S-adenosyl-L-homocysteine + H(+). Its function is as follows. Specifically methylates guanosine-37 in various tRNAs. The sequence is that of tRNA (guanine-N(1)-)-methyltransferase from Cupriavidus metallidurans (strain ATCC 43123 / DSM 2839 / NBRC 102507 / CH34) (Ralstonia metallidurans).